Here is a 989-residue protein sequence, read N- to C-terminus: Phosphoenolpyruvate carboxylase (989 aa).

Active-site residues include H175 and K630.

Belongs to the PEPCase type 1 family. Mg(2+) serves as cofactor.

The catalysed reaction is oxaloacetate + phosphate = phosphoenolpyruvate + hydrogencarbonate. Functionally, forms oxaloacetate, a four-carbon dicarboxylic acid source for the tricarboxylic acid cycle. This is Phosphoenolpyruvate carboxylase from Prochlorococcus marinus (strain MIT 9215).